The primary structure comprises 209 residues: C-type lectin domain family 6 member A (209 aa).

Over 1-20 (MVQERQSQGKGVCWTLRLWS) the chain is Cytoplasmic. Residues 21–43 (AAVISMLLLSTCFIASCVVTYQF) traverse the membrane as a helical; Signal-anchor for type II membrane protein segment. Topologically, residues 44-209 (IMDQPSRRLY…SICEMKKIYL (166 aa)) are extracellular. 4 disulfides stabilise this stretch: Cys64-Cys78, Cys79-Cys90, Cys107-Cys202, and Cys176-Cys194. The region spanning 86-203 (FGSSCYLIST…CDSKHNSICE (118 aa)) is the C-type lectin domain. Residues Val116, Asn118, and Glu122 each contribute to the Ca(2+) site. An N-linked (GlcNAc...) asparagine glycan is attached at Asn131. Residues Glu168, Asn170, and Glu174 each coordinate Ca(2+). Residues 168–170 (EPN), Glu174, Trp182, and 190–191 (ND) each bind alpha-D-mannopyranose. Residues Asn190, Asp191, and Glu203 each contribute to the Ca(2+) site.

As to quaternary structure, associated with FCER1G. Heterodimer with CLEC4D; this heterodimer forms a pattern recognition receptor (PRR) against fungal infection. As to expression, expressed by the XS52 DC (dendritic cell) line (at protein level). Expressed constitutively by the epidermis, and skin resident DC appear to be the major source of this expression. Expressed in the spleen and thymus. Expression was undetectable in non-DC lines, including macrophage lines (J774 and Raw), T-cell lines (7-17, HDK-1, and D10), B-cell hybridoma (5C5), a keratinocyte line (Pam 212), and a fibroblast line (NS01).

It localises to the cell membrane. In terms of biological role, calcium-dependent lectin that acts as a pattern recognition receptor (PRR) of the innate immune system: specifically recognizes and binds alpha-mannans on C.albicans hypheas. Binding of C.albicans alpha-mannans to this receptor complex leads to phosphorylation of the immunoreceptor tyrosine-based activation motif (ITAM) of FCER1G, triggering activation of SYK, CARD9 and NF-kappa-B, consequently driving maturation of antigen-presenting cells and shaping antigen-specific priming of T-cells toward effector T-helper 1 and T-helper 17 cell subtypes. Also recognizes, in a mannose-dependent manner, allergens from house dust mite and fungi, by promoting cysteinyl leukotriene production. Recognizes soluble elements from the eggs of Shistosoma mansoni altering adaptive immune responses. This is C-type lectin domain family 6 member A from Mus musculus (Mouse).